The chain runs to 203 residues: A-type ATP synthase subunit E (203 aa).

The protein belongs to the V-ATPase E subunit family. In terms of assembly, has multiple subunits with at least A(3), B(3), C, D, E, F, H, I and proteolipid K(x).

Its subcellular location is the cell membrane. In terms of biological role, component of the A-type ATP synthase that produces ATP from ADP in the presence of a proton gradient across the membrane. The protein is A-type ATP synthase subunit E of Thermococcus sibiricus (strain DSM 12597 / MM 739).